We begin with the raw amino-acid sequence, 296 residues long: Probable 6-phosphogluconolactonase 1 (296 aa).

Belongs to the glucosamine/galactosamine-6-phosphate isomerase family. 6-phosphogluconolactonase subfamily.

The catalysed reaction is 6-phospho-D-glucono-1,5-lactone + H2O = 6-phospho-D-gluconate + H(+). The protein operates within carbohydrate degradation; pentose phosphate pathway; D-ribulose 5-phosphate from D-glucose 6-phosphate (oxidative stage): step 2/3. Its function is as follows. Hydrolysis of 6-phosphogluconolactone to 6-phosphogluconate. The sequence is that of Probable 6-phosphogluconolactonase 1 from Oryza sativa subsp. japonica (Rice).